The following is a 337-amino-acid chain: uncharacterized protein (337 aa).

The ABC transporter domain occupies 5–235; that stretch reads VEFDNVSRLY…PRTPFVAGFV (231 aa). 37–44 is a binding site for ATP; that stretch reads GPSGSGKT.

This sequence belongs to the ABC transporter superfamily.

Functionally, probably part of the ABC transporter complex YdcSTUV. Probably responsible for energy coupling to the transport system. This is an uncharacterized protein from Escherichia coli (strain K12).